The primary structure comprises 372 residues: Nucleosome assembly protein 1;1 (372 aa).

Residues 26–80 (VNALKNKLQNLAGQRSDVLENLTPNVRKRVDALRDIQSQHDELEAKFREERAILE) adopt a coiled-coil conformation. A Phosphoserine modification is found at S41. The Nuclear export signal signature appears at 47 to 62 (LTPNVRKRVDALRDIQ). The Nuclear localization signal signature appears at 223 to 228 (KKKPKK). The tract at residues 299-372 (AMEAEDFEID…DERPPECKQQ (74 aa)) is disordered. Residues 300-337 (MEAEDFEIDDDEEDDIDEDEDEEDEEDEEDDDDEDEEE) show a composition bias toward acidic residues. The span at 360 to 372 (GKQDERPPECKQQ) shows a compositional bias: basic and acidic residues. C369 is modified (cysteine methyl ester). Residue C369 is the site of S-farnesyl cysteine attachment. The propeptide at 370–372 (KQQ) is removed in mature form.

The protein belongs to the nucleosome assembly protein (NAP) family. As to quaternary structure, can form homomeric and heteromeric protein complexes with NAP1;2, NAP1;3 and NAP1;4. Binds histone H2A. Interacts with PP438/PNM1. In terms of processing, prenylation of the protein is required for its function during the cell proliferation phase of leaf development. In terms of tissue distribution, ubiquitous.

It localises to the nucleus. The protein localises to the cytoplasm. In terms of biological role, may modulate chromatin structure by regulation of nucleosome assembly/disassembly. Contributes to the regulation of cell proliferation and cell expansion. May function in nucleotide excision repair (NER). Involved in somatic homologous recombination. This Arabidopsis thaliana (Mouse-ear cress) protein is Nucleosome assembly protein 1;1 (NAP1;1).